A 428-amino-acid chain; its full sequence is Ectoine/5-hydroxyectoine TRAP transporter large permease protein UehC (428 aa).

12 consecutive transmembrane segments (helical) span residues Met-9 to Ile-29, Leu-49 to Ile-69, Ala-99 to Ile-119, Ala-139 to Ile-159, Phe-172 to Ile-192, Ala-217 to Ser-237, Ala-242 to Leu-262, Gly-273 to Ile-293, Ile-302 to Ile-322, Phe-324 to Phe-344, Val-366 to Phe-386, and Phe-400 to Phe-420.

It belongs to the TRAP transporter large permease family. The complex comprises the extracytoplasmic solute receptor protein UehA, and the two transmembrane proteins UehB and UehC.

It localises to the cell inner membrane. Its function is as follows. Part of the tripartite ATP-independent periplasmic (TRAP) transport system UehABC, which imports both ectoine and 5-hydroxyectoine as nutrients, and not as osmoprotectants. The polypeptide is Ectoine/5-hydroxyectoine TRAP transporter large permease protein UehC (Ruegeria pomeroyi (strain ATCC 700808 / DSM 15171 / DSS-3) (Silicibacter pomeroyi)).